We begin with the raw amino-acid sequence, 168 residues long: MKIAIYPGSFDPVTNGHIDIIQRGRHLFDKIIVSILLNPGKKALFSLDERLDMLTESLKDIDGVEVDSFAGLLIDYAERKNAKAILRGMRAVSDFEYEFQMALMNRRLNRDIQTVFLMTGMRWIYTSSSIIKEAATFGGDISGMVPAIVEKKLEEKIGYVVNHKKAED.

Residue serine 9 participates in substrate binding. ATP contacts are provided by residues serine 9–phenylalanine 10 and histidine 17. Substrate-binding residues include lysine 41, leucine 73, and arginine 87. ATP is bound by residues glycine 88–arginine 90, glutamate 98, and tryptophan 123–serine 129.

The protein belongs to the bacterial CoaD family. As to quaternary structure, homohexamer. Mg(2+) is required as a cofactor.

It is found in the cytoplasm. It catalyses the reaction (R)-4'-phosphopantetheine + ATP + H(+) = 3'-dephospho-CoA + diphosphate. It functions in the pathway cofactor biosynthesis; coenzyme A biosynthesis; CoA from (R)-pantothenate: step 4/5. Reversibly transfers an adenylyl group from ATP to 4'-phosphopantetheine, yielding dephospho-CoA (dPCoA) and pyrophosphate. In Desulfosudis oleivorans (strain DSM 6200 / JCM 39069 / Hxd3) (Desulfococcus oleovorans), this protein is Phosphopantetheine adenylyltransferase.